A 162-amino-acid polypeptide reads, in one-letter code: Large ribosomal subunit protein bL17 (162 aa).

Over residues 125 to 140 (AAKEAPAKEVAEEKAA) the composition is skewed to basic and acidic residues. The interval 125–162 (AAKEAPAKEVAEEKAAKPAKKAAPKKAEKEEAEDAAEA) is disordered.

This sequence belongs to the bacterial ribosomal protein bL17 family. Part of the 50S ribosomal subunit. Contacts protein L32.

This chain is Large ribosomal subunit protein bL17, found in Oleidesulfovibrio alaskensis (strain ATCC BAA-1058 / DSM 17464 / G20) (Desulfovibrio alaskensis).